The sequence spans 519 residues: Acetylcholine receptor subunit gamma (519 aa).

The first 22 residues, 1–22 (MQGGQRPHLLLLLLAVCLGAQS), serve as a signal peptide directing secretion. The Extracellular segment spans residues 23-240 (RNQEERLLAD…VVFYLLIQRK (218 aa)). N-linked (GlcNAc...) asparagine glycosylation is found at asparagine 52 and asparagine 163. The cysteines at positions 150 and 164 are disulfide-linked. Helical transmembrane passes span 241-265 (PLFYVINIIAPCVLISSVAILIYFL), 274-292 (CTVATNVLLAQTVFLFLVA), and 308-329 (YLTFLMVVTILIVVNSVVVLNV). The Cytoplasmic segment spans residues 330–476 (SLRSPHTHSM…WLLVGRVLDR (147 aa)). Residues 477–497 (VCFLAMLSLFICGTAGIFLMA) traverse the membrane as a helical segment.

The protein belongs to the ligand-gated ion channel (TC 1.A.9) family. Acetylcholine receptor (TC 1.A.9.1) subfamily. Gamma/CHRNG sub-subfamily. In terms of assembly, pentamer of two alpha chains, and one each of the beta, delta, and gamma (in immature muscle) or epsilon (in mature muscle) chains. In terms of tissue distribution, at least in myotubes of skeletal muscle.

The protein resides in the postsynaptic cell membrane. It localises to the cell membrane. The enzyme catalyses K(+)(in) = K(+)(out). It catalyses the reaction Na(+)(in) = Na(+)(out). In terms of biological role, after binding acetylcholine, the AChR responds by an extensive change in conformation that affects all subunits and leads to opening of an ion-conducting channel across the plasma membrane. The chain is Acetylcholine receptor subunit gamma (Chrng) from Mus musculus (Mouse).